The sequence spans 321 residues: uncharacterized protein (321 aa).

This is an uncharacterized protein from Acanthamoeba polyphaga (Amoeba).